Here is a 193-residue protein sequence, read N- to C-terminus: Probable GTP-binding protein EngB (193 aa).

Residues 24-193 (NIPEIALAGR…ELKAALAELL (170 aa)) form the EngB-type G domain. Residues 32–39 (GRSNVGKS), 59–63 (GKTRT), 77–80 (DLPG), 144–147 (TKAD), and 174–176 (FSA) contribute to the GTP site. Residues S39 and T61 each contribute to the Mg(2+) site.

The protein belongs to the TRAFAC class TrmE-Era-EngA-EngB-Septin-like GTPase superfamily. EngB GTPase family. Mg(2+) is required as a cofactor.

Its function is as follows. Necessary for normal cell division and for the maintenance of normal septation. The protein is Probable GTP-binding protein EngB of Syntrophomonas wolfei subsp. wolfei (strain DSM 2245B / Goettingen).